Consider the following 255-residue polypeptide: Imidazole glycerol phosphate synthase subunit HisF (255 aa).

Residues aspartate 11 and aspartate 130 contribute to the active site.

The protein belongs to the HisA/HisF family. In terms of assembly, heterodimer of HisH and HisF.

Its subcellular location is the cytoplasm. The catalysed reaction is 5-[(5-phospho-1-deoxy-D-ribulos-1-ylimino)methylamino]-1-(5-phospho-beta-D-ribosyl)imidazole-4-carboxamide + L-glutamine = D-erythro-1-(imidazol-4-yl)glycerol 3-phosphate + 5-amino-1-(5-phospho-beta-D-ribosyl)imidazole-4-carboxamide + L-glutamate + H(+). Its pathway is amino-acid biosynthesis; L-histidine biosynthesis; L-histidine from 5-phospho-alpha-D-ribose 1-diphosphate: step 5/9. In terms of biological role, IGPS catalyzes the conversion of PRFAR and glutamine to IGP, AICAR and glutamate. The HisF subunit catalyzes the cyclization activity that produces IGP and AICAR from PRFAR using the ammonia provided by the HisH subunit. This Rhodopseudomonas palustris (strain ATCC BAA-98 / CGA009) protein is Imidazole glycerol phosphate synthase subunit HisF.